Reading from the N-terminus, the 528-residue chain is ATP synthase subunit beta 2 (528 aa).

Polar residues predominate over residues 1 to 10 (MADPQATNGT). Residues 1-27 (MADPQATNGTGAACAERDASDVGDARD) are disordered. The segment covering 15–27 (AERDASDVGDARD) has biased composition (basic and acidic residues). Residue 179-186 (GGAGVGKT) participates in ATP binding. A compositionally biased stretch (basic and acidic residues) spans 488-499 (AAAREADARREA). Positions 488 to 528 (AAAREADARREAAAAASGAGPGTTSDPASGSAEPQGARHGR) are disordered.

The protein belongs to the ATPase alpha/beta chains family. As to quaternary structure, F-type ATPases have 2 components, CF(1) - the catalytic core - and CF(0) - the membrane proton channel. CF(1) has five subunits: alpha(3), beta(3), gamma(1), delta(1), epsilon(1). CF(0) has three main subunits: a(1), b(2) and c(9-12). The alpha and beta chains form an alternating ring which encloses part of the gamma chain. CF(1) is attached to CF(0) by a central stalk formed by the gamma and epsilon chains, while a peripheral stalk is formed by the delta and b chains.

The protein localises to the cell inner membrane. It catalyses the reaction ATP + H2O + 4 H(+)(in) = ADP + phosphate + 5 H(+)(out). Produces ATP from ADP in the presence of a proton gradient across the membrane. The catalytic sites are hosted primarily by the beta subunits. The polypeptide is ATP synthase subunit beta 2 (Burkholderia pseudomallei (strain 1106a)).